The following is a 255-amino-acid chain: Ornithine decarboxylase antizyme (255 aa).

Belongs to the ODC antizyme family. In terms of assembly, interacts with ODC and thereby sterically blocks ODC homodimerization.

Ornithine decarboxylase (ODC) antizyme protein that negatively regulates ODC activity and intracellular polyamine biosynthesis in response to increased intracellular polyamine levels. Binds to ODC monomers, inhibiting the assembly of the functional ODC homodimer, and targets the monomers for ubiquitin-independent proteolytic destruction by the 26S proteasome. This chain is Ornithine decarboxylase antizyme (OAZ1), found in Candida glabrata (strain ATCC 2001 / BCRC 20586 / JCM 3761 / NBRC 0622 / NRRL Y-65 / CBS 138) (Yeast).